The following is a 158-amino-acid chain: Single-stranded DNA-binding protein 2 (158 aa).

One can recognise an SSB domain in the interval 1–107 (MNETIVCVVG…IDALAVGHDL (107 aa)). The segment at 109–158 (RGTSAFRRPSAKDGEAGVSPAARPEPNWETEPGSQPSVEHQPQPEPAGVT) is disordered.

As to quaternary structure, homotetramer.

The protein is Single-stranded DNA-binding protein 2 (ssb2) of Streptomyces avermitilis (strain ATCC 31267 / DSM 46492 / JCM 5070 / NBRC 14893 / NCIMB 12804 / NRRL 8165 / MA-4680).